The sequence spans 249 residues: Putative nicotinamide mononucleotide adenylyltransferase (249 aa).

Residues S40 and F41 each coordinate NAD(+). Position 48 (H48) interacts with ATP. NAD(+) is bound by residues T97, G129, D131, R165, and N206. T214–R217 serves as a coordination point for ATP.

The protein belongs to the eukaryotic NMN adenylyltransferase family. POF1 subfamily.

It localises to the cytoplasm. The protein localises to the nucleus. It carries out the reaction beta-nicotinamide D-ribonucleotide + ATP + H(+) = diphosphate + NAD(+). It functions in the pathway cofactor biosynthesis; NAD(+) biosynthesis; NAD(+) from nicotinamide D-ribonucleotide: step 1/1. In terms of biological role, catalyzes the formation of NAD(+) from nicotinamide mononucleotide (NMN) and ATP. Involved in the salvage pathway for NAD(+) biosynthesis via NMN. The polypeptide is Putative nicotinamide mononucleotide adenylyltransferase (Schizosaccharomyces pombe (strain 972 / ATCC 24843) (Fission yeast)).